Reading from the N-terminus, the 892-residue chain is Translation initiation factor IF-2 (892 aa).

Positions lysine 88–alanine 305 are disordered. Composition is skewed to basic and acidic residues over residues valine 93–valine 159 and aspartate 166–lysine 216. Over residues glycine 254–lysine 269 the composition is skewed to basic residues. Residues histidine 270–alanine 282 are compositionally biased toward basic and acidic residues. One can recognise a tr-type G domain in the interval proline 391–lysine 560. The G1 stretch occupies residues glycine 400–threonine 407. A GTP-binding site is contributed by glycine 400–threonine 407. The G2 stretch occupies residues glycine 425 to histidine 429. A G3 region spans residues aspartate 446–glycine 449. GTP-binding positions include aspartate 446–histidine 450 and asparagine 500–aspartate 503. Residues asparagine 500 to aspartate 503 are G4. The tract at residues serine 536–lysine 538 is G5.

Belongs to the TRAFAC class translation factor GTPase superfamily. Classic translation factor GTPase family. IF-2 subfamily.

Its subcellular location is the cytoplasm. In terms of biological role, one of the essential components for the initiation of protein synthesis. Protects formylmethionyl-tRNA from spontaneous hydrolysis and promotes its binding to the 30S ribosomal subunits. Also involved in the hydrolysis of GTP during the formation of the 70S ribosomal complex. The sequence is that of Translation initiation factor IF-2 from Salmonella paratyphi A (strain ATCC 9150 / SARB42).